A 233-amino-acid polypeptide reads, in one-letter code: Probable GTP-binding protein EngB (233 aa).

An EngB-type G domain is found at A23–L209. GTP-binding positions include G31–S38, G58–H62, D82–G85, T149–D152, and F188–S190. Residues S38 and T60 each coordinate Mg(2+).

The protein belongs to the TRAFAC class TrmE-Era-EngA-EngB-Septin-like GTPase superfamily. EngB GTPase family. It depends on Mg(2+) as a cofactor.

Its function is as follows. Necessary for normal cell division and for the maintenance of normal septation. This is Probable GTP-binding protein EngB from Ralstonia pickettii (strain 12J).